A 162-amino-acid polypeptide reads, in one-letter code: Protein-export protein SecB (162 aa).

It belongs to the SecB family. As to quaternary structure, homotetramer, a dimer of dimers. One homotetramer interacts with 1 SecA dimer.

It localises to the cytoplasm. Its function is as follows. One of the proteins required for the normal export of preproteins out of the cell cytoplasm. It is a molecular chaperone that binds to a subset of precursor proteins, maintaining them in a translocation-competent state. It also specifically binds to its receptor SecA. The chain is Protein-export protein SecB from Hamiltonella defensa subsp. Acyrthosiphon pisum (strain 5AT).